We begin with the raw amino-acid sequence, 155 residues long: Small ribosomal subunit protein uS7c (155 aa).

This sequence belongs to the universal ribosomal protein uS7 family. In terms of assembly, part of the 30S ribosomal subunit.

The protein localises to the plastid. It is found in the chloroplast. Functionally, one of the primary rRNA binding proteins, it binds directly to 16S rRNA where it nucleates assembly of the head domain of the 30S subunit. The protein is Small ribosomal subunit protein uS7c (rps7) of Spathiphyllum wallisii (Peace lily).